The primary structure comprises 143 residues: Nucleoside diphosphate kinase (143 aa).

ATP-binding residues include Lys11, Phe59, Arg87, Thr93, Arg104, and Asn114. Residue His117 is the Pros-phosphohistidine intermediate of the active site.

It belongs to the NDK family. In terms of assembly, homotetramer. Mg(2+) serves as cofactor.

The protein localises to the cytoplasm. It catalyses the reaction a 2'-deoxyribonucleoside 5'-diphosphate + ATP = a 2'-deoxyribonucleoside 5'-triphosphate + ADP. The catalysed reaction is a ribonucleoside 5'-diphosphate + ATP = a ribonucleoside 5'-triphosphate + ADP. Major role in the synthesis of nucleoside triphosphates other than ATP. The ATP gamma phosphate is transferred to the NDP beta phosphate via a ping-pong mechanism, using a phosphorylated active-site intermediate. The chain is Nucleoside diphosphate kinase from Alcanivorax borkumensis (strain ATCC 700651 / DSM 11573 / NCIMB 13689 / SK2).